We begin with the raw amino-acid sequence, 380 residues long: Crotonobetainyl-CoA reductase (380 aa).

Belongs to the acyl-CoA dehydrogenase family. As to quaternary structure, homotetramer. Requires FAD as cofactor.

The protein localises to the cytoplasm. The enzyme catalyses 4-(trimethylamino)butanoyl-CoA + oxidized [electron-transfer flavoprotein] + H(+) = crotonobetainyl-CoA + reduced [electron-transfer flavoprotein]. It participates in amine and polyamine metabolism; carnitine metabolism. In terms of biological role, catalyzes the reduction of crotonobetainyl-CoA to gamma-butyrobetainyl-CoA. The polypeptide is Crotonobetainyl-CoA reductase (Escherichia coli (strain UTI89 / UPEC)).